We begin with the raw amino-acid sequence, 109 residues long: RYamide neuropeptides (109 aa).

Positions 1-22 are cleaved as a signal peptide; that stretch reads MNECVNKLLHLKFLFYFILGIQ. At Tyr33 the chain carries Tyrosine amide. Positions 36-53 are excised as a propeptide; it reads STTYDESLKSRRIFIVPR. Tyr63 is modified (tyrosine amide). Residues 67 to 109 constitute a propeptide that is removed on maturation; sequence SGKYLCLSREINKLIVRKRLRNNDKERTPTLSFITKHFLMRNT.

It is found in the secreted. Neuropeptides RYamide-1 and RYamide-2 are ligands for the G-protein coupled receptor RYa-R. May suppress feeding behavior. This Drosophila melanogaster (Fruit fly) protein is RYamide neuropeptides.